The chain runs to 55 residues: Rubredoxin-2 (55 aa).

In terms of domain architecture, Rubredoxin-like spans 1 to 54 (MRKWQCVVCGFIYDEALGLPEEGIPAGTRWEDIPADWVCPDCGVGKIDFEMIEI). Residues cysteine 6, cysteine 9, cysteine 39, and cysteine 42 each coordinate Fe cation.

The protein belongs to the rubredoxin family. The cofactor is Fe(3+).

The protein localises to the cytoplasm. Its pathway is hydrocarbon metabolism; alkane degradation. Its function is as follows. Involved in the hydrocarbon hydroxylating system, which transfers electrons from NADH to rubredoxin reductase and then through rubredoxin to alkane 1 monooxygenase. The sequence is that of Rubredoxin-2 (rubA2) from Pseudomonas aeruginosa (strain ATCC 15692 / DSM 22644 / CIP 104116 / JCM 14847 / LMG 12228 / 1C / PRS 101 / PAO1).